Here is a 291-residue protein sequence, read N- to C-terminus: Segregation and condensation protein B (291 aa).

The protein belongs to the ScpB family. As to quaternary structure, homodimer. Homodimerization may be required to stabilize the binding of ScpA to the Smc head domains. Component of a cohesin-like complex composed of ScpA, ScpB and the Smc homodimer, in which ScpA and ScpB bind to the head domain of Smc. The presence of the three proteins is required for the association of the complex with DNA.

The protein localises to the cytoplasm. Its function is as follows. Participates in chromosomal partition during cell division. May act via the formation of a condensin-like complex containing Smc and ScpA that pull DNA away from mid-cell into both cell halves. The protein is Segregation and condensation protein B of Mycoplasmoides gallisepticum (strain R(low / passage 15 / clone 2)) (Mycoplasma gallisepticum).